The following is a 389-amino-acid chain: Elongation factor Tu-3 (389 aa).

The tr-type G domain maps to 10-203 (KPHLNIGTMG…AVDTYVPMPE (194 aa)). Residues 19-26 (GHVDHGKT) are G1. 19 to 26 (GHVDHGKT) contributes to the GTP binding site. Thr26 contacts Mg(2+). The interval 60-64 (GITIN) is G2. The tract at residues 81–84 (DMPG) is G3. GTP is bound by residues 81-85 (DMPGH) and 136-139 (NKAD). Residues 136-139 (NKAD) are G4. Residues 173 to 175 (SGL) are G5.

This sequence belongs to the TRAFAC class translation factor GTPase superfamily. Classic translation factor GTPase family. EF-Tu/EF-1A subfamily. As to quaternary structure, monomer.

It localises to the cytoplasm. It catalyses the reaction GTP + H2O = GDP + phosphate + H(+). Functionally, GTP hydrolase that promotes the GTP-dependent binding of aminoacyl-tRNA to the A-site of ribosomes during protein biosynthesis. The polypeptide is Elongation factor Tu-3 (Streptomyces ramocissimus).